Reading from the N-terminus, the 256-residue chain is 1-(5-phosphoribosyl)-5-[(5-phosphoribosylamino)methylideneamino] imidazole-4-carboxamide isomerase (256 aa).

Aspartate 9 functions as the Proton acceptor in the catalytic mechanism. Aspartate 130 serves as the catalytic Proton donor.

It belongs to the HisA/HisF family.

It is found in the cytoplasm. It catalyses the reaction 1-(5-phospho-beta-D-ribosyl)-5-[(5-phospho-beta-D-ribosylamino)methylideneamino]imidazole-4-carboxamide = 5-[(5-phospho-1-deoxy-D-ribulos-1-ylimino)methylamino]-1-(5-phospho-beta-D-ribosyl)imidazole-4-carboxamide. Its pathway is amino-acid biosynthesis; L-histidine biosynthesis; L-histidine from 5-phospho-alpha-D-ribose 1-diphosphate: step 4/9. This chain is 1-(5-phosphoribosyl)-5-[(5-phosphoribosylamino)methylideneamino] imidazole-4-carboxamide isomerase, found in Prochlorococcus marinus (strain SARG / CCMP1375 / SS120).